Reading from the N-terminus, the 289-residue chain is Iodotyrosine deiodinase 1 (289 aa).

A helical membrane pass occupies residues 1–21 (MYFLTPILVAILCILVVWIFK). Over residues 47 to 58 (DLKDSSDLHQAE) the composition is skewed to basic and acidic residues. The interval 47–69 (DLKDSSDLHQAEEDADEWQESEE) is disordered. Residues 59–69 (EDADEWQESEE) show a composition bias toward acidic residues. Residues 100–104 (RRSVR), serine 128, and 128–129 (SG) contribute to the FMN site. Alanine 130, glutamate 157, tyrosine 161, and lysine 182 together coordinate 3,5-diiodo-L-tyrosine. 3-iodo-L-tyrosine is bound by residues alanine 130, glutamate 157, tyrosine 161, and lysine 182. Residues 237–239 (TTT) and arginine 279 each bind FMN.

This sequence belongs to the nitroreductase family. As to quaternary structure, homodimer. It depends on FMN as a cofactor.

Its subcellular location is the cell membrane. The protein localises to the cytoplasmic vesicle membrane. It catalyses the reaction 2 iodide + L-tyrosine + 2 NADP(+) = 3,5-diiodo-L-tyrosine + 2 NADPH + H(+). It carries out the reaction iodide + L-tyrosine + NADP(+) = 3-iodo-L-tyrosine + NADPH. The enzyme catalyses 3-iodo-L-tyrosine + iodide + NADP(+) = 3,5-diiodo-L-tyrosine + NADPH + H(+). The catalysed reaction is L-tyrosine + chloride + NADP(+) = 3-chloro-L-tyrosine + NADPH. It catalyses the reaction bromide + L-tyrosine + NADP(+) = 3-bromo-L-tyrosine + NADPH. In terms of biological role, catalyzes the dehalogenation of halotyrosines such as 3-bromo-L-tyrosine, 3-chloro-L-tyrosine, 3-iodo-L-tyrosine and 3,5-diiodo-L-tyrosine. During thyroid hormone biosynthesis, facilitates iodide salvage by catalysing the oxidative NADPH-dependent deiodination of the halogenated by-products of thyroid hormone production, monoiodotyrosine (L-MIT) and diiodotyrosine (L-DIT). The scavanged iodide can then reenter the hormone-producing pathways. Acts more efficiently on 3-iodo-L-tyrosine than 3,5-diiodo-L-tyrosine. The protein is Iodotyrosine deiodinase 1 (IYD) of Pongo abelii (Sumatran orangutan).